The chain runs to 122 residues: MLALFIHTTGVLSKLLSEAVEAIEPGPVEGIRATGANKLEEILYGVLPQVMPLLISYSLYRFESNVRSATVVGMVGAGGIGVTLWEAIRGFQFQQTCALMVLIIVTVSLLDFLSQRLRKHFI.

Residues 1-114 (MLALFIHTTG…VTVSLLDFLS (114 aa)) form the ABC transmembrane type-1 domain. 4 helical membrane passes run 3–23 (ALFI…VEAI), 39–59 (LEEI…SYSL), 68–88 (SATV…WEAI), and 93–113 (FQQT…LDFL).

Belongs to the binding-protein-dependent transport system permease family. In terms of assembly, if the reading frame is restored, the complex is composed of two ATP-binding proteins (PhnC), two transmembrane proteins (PhnE) and a solute-binding protein (PhnD).

The protein localises to the cell inner membrane. Functionally, C-terminal fragment of the PhnE protein, part of a phosphonate usage operon that is cryptic in K12 strains. Growth of K12 strains on phosphonate can be observed when it is used as the sole phosphorus source after a 60 hour lag period, suggesting the operon is activated. An intact PhnE in strain B is (AC A0A140NFA3). Part of the binding-protein-dependent transport system for phosphonates; probably responsible for the translocation of the substrate across the membrane. In Escherichia coli (strain K12), this protein is Putative cryptic phosphonate transport system permease protein PhnE2 (phnE).